The primary structure comprises 235 residues: Large ribosomal subunit protein uL1 (235 aa).

Belongs to the universal ribosomal protein uL1 family. As to quaternary structure, part of the 50S ribosomal subunit.

In terms of biological role, binds directly to 23S rRNA. The L1 stalk is quite mobile in the ribosome, and is involved in E site tRNA release. Its function is as follows. Protein L1 is also a translational repressor protein, it controls the translation of the L11 operon by binding to its mRNA. The sequence is that of Large ribosomal subunit protein uL1 from Renibacterium salmoninarum (strain ATCC 33209 / DSM 20767 / JCM 11484 / NBRC 15589 / NCIMB 2235).